The primary structure comprises 218 residues: Probable transaldolase (218 aa).

Lys87 serves as the catalytic Schiff-base intermediate with substrate.

This sequence belongs to the transaldolase family. Type 3B subfamily.

The protein localises to the cytoplasm. It carries out the reaction D-sedoheptulose 7-phosphate + D-glyceraldehyde 3-phosphate = D-erythrose 4-phosphate + beta-D-fructose 6-phosphate. Its pathway is carbohydrate degradation; pentose phosphate pathway; D-glyceraldehyde 3-phosphate and beta-D-fructose 6-phosphate from D-ribose 5-phosphate and D-xylulose 5-phosphate (non-oxidative stage): step 2/3. Transaldolase is important for the balance of metabolites in the pentose-phosphate pathway. In Bacteroides fragilis (strain YCH46), this protein is Probable transaldolase.